Here is a 165-residue protein sequence, read N- to C-terminus: NADPH-dependent 7-cyano-7-deazaguanine reductase (165 aa).

Cysteine 56 serves as the catalytic Thioimide intermediate. Aspartate 63 functions as the Proton donor in the catalytic mechanism. Substrate contacts are provided by residues valine 78–serine 80 and histidine 97–glutamate 98.

Belongs to the GTP cyclohydrolase I family. QueF type 1 subfamily.

It is found in the cytoplasm. It carries out the reaction 7-aminomethyl-7-carbaguanine + 2 NADP(+) = 7-cyano-7-deazaguanine + 2 NADPH + 3 H(+). The protein operates within tRNA modification; tRNA-queuosine biosynthesis. Functionally, catalyzes the NADPH-dependent reduction of 7-cyano-7-deazaguanine (preQ0) to 7-aminomethyl-7-deazaguanine (preQ1). This chain is NADPH-dependent 7-cyano-7-deazaguanine reductase, found in Bacillus licheniformis (strain ATCC 14580 / DSM 13 / JCM 2505 / CCUG 7422 / NBRC 12200 / NCIMB 9375 / NCTC 10341 / NRRL NRS-1264 / Gibson 46).